Reading from the N-terminus, the 290-residue chain is 4-hydroxy-tetrahydrodipicolinate synthase (290 aa).

Thr44 contributes to the pyruvate binding site. The Proton donor/acceptor role is filled by Tyr132. The Schiff-base intermediate with substrate role is filled by Lys160. Residue Ile202 participates in pyruvate binding.

The protein belongs to the DapA family. As to quaternary structure, homotetramer; dimer of dimers.

It is found in the cytoplasm. The catalysed reaction is L-aspartate 4-semialdehyde + pyruvate = (2S,4S)-4-hydroxy-2,3,4,5-tetrahydrodipicolinate + H2O + H(+). Its pathway is amino-acid biosynthesis; L-lysine biosynthesis via DAP pathway; (S)-tetrahydrodipicolinate from L-aspartate: step 3/4. Catalyzes the condensation of (S)-aspartate-beta-semialdehyde [(S)-ASA] and pyruvate to 4-hydroxy-tetrahydrodipicolinate (HTPA). The chain is 4-hydroxy-tetrahydrodipicolinate synthase from Geotalea uraniireducens (strain Rf4) (Geobacter uraniireducens).